The chain runs to 80 residues: Ataxin-8 (80 aa).

As to expression, specifically found in brains from SCA8 patients (at protein level).

It is found in the nucleus. The chain is Ataxin-8 (ATXN8) from Homo sapiens (Human).